A 376-amino-acid polypeptide reads, in one-letter code: uncharacterized protein (376 aa).

A helical transmembrane segment spans residues F19–Y39.

The protein to S.pombe SpAC5H10.12c.

The protein resides in the cytoplasm. It localises to the nucleus. Its subcellular location is the membrane. This is an uncharacterized protein from Schizosaccharomyces pombe (strain 972 / ATCC 24843) (Fission yeast).